Here is a 347-residue protein sequence, read N- to C-terminus: Phosphate acyltransferase (347 aa).

This sequence belongs to the PlsX family. Homodimer. Probably interacts with PlsY.

The protein localises to the cytoplasm. The enzyme catalyses a fatty acyl-[ACP] + phosphate = an acyl phosphate + holo-[ACP]. It participates in lipid metabolism; phospholipid metabolism. Catalyzes the reversible formation of acyl-phosphate (acyl-PO(4)) from acyl-[acyl-carrier-protein] (acyl-ACP). This enzyme utilizes acyl-ACP as fatty acyl donor, but not acyl-CoA. The polypeptide is Phosphate acyltransferase (Sinorhizobium medicae (strain WSM419) (Ensifer medicae)).